We begin with the raw amino-acid sequence, 252 residues long: Chitooligosaccharide deacetylase (252 aa).

Position 125 (histidine 125) interacts with Mg(2+).

The protein belongs to the YdjC deacetylase family. ChbG subfamily. As to quaternary structure, homodimer. It depends on Mg(2+) as a cofactor.

The protein resides in the cytoplasm. It carries out the reaction N,N'-diacetylchitobiose + H2O = N-acetyl-beta-D-glucosaminyl-(1-&gt;4)-D-glucosamine + acetate. The catalysed reaction is diacetylchitobiose-6'-phosphate + H2O = N'-monoacetylchitobiose-6'-phosphate + acetate. The protein operates within glycan degradation; chitin degradation. Its function is as follows. Involved in the degradation of chitin. ChbG is essential for growth on the acetylated chitooligosaccharides chitobiose and chitotriose but is dispensable for growth on cellobiose and chitosan dimer, the deacetylated form of chitobiose. Deacetylation of chitobiose-6-P and chitotriose-6-P is necessary for both the activation of the chb promoter by the regulatory protein ChbR and the hydrolysis of phosphorylated beta-glucosides by the phospho-beta-glucosidase ChbF. Catalyzes the removal of only one acetyl group from chitobiose-6-P to yield monoacetylchitobiose-6-P, the inducer of ChbR and the substrate of ChbF. This is Chitooligosaccharide deacetylase from Escherichia coli O157:H7.